We begin with the raw amino-acid sequence, 526 residues long: CTP synthase (526 aa).

An amidoligase domain region spans residues 1–270; sequence MKYIFVTGGV…ADVLSTHLGL (270 aa). Serine 12 contacts CTP. A UTP-binding site is contributed by serine 12. ATP-binding positions include 13–18 and aspartate 70; that span reads GLGKGI. Aspartate 70 and glutamate 145 together coordinate Mg(2+). Residues 152–154, 191–196, and lysine 227 each bind CTP; these read DIE and KTKPTQ. UTP is bound by residues 191-196 and lysine 227; that span reads KTKPTQ. The 233-residue stretch at 293–525 folds into the Glutamine amidotransferase type-1 domain; that stretch reads VAIVSKYGIE…VEACRANKRT (233 aa). L-glutamine is bound at residue glycine 349. Cysteine 376 serves as the catalytic Nucleophile; for glutamine hydrolysis. L-glutamine-binding positions include 377–380, glutamate 400, and arginine 455; that span reads LGFQ. Residues histidine 498 and glutamate 500 contribute to the active site.

This sequence belongs to the CTP synthase family. As to quaternary structure, homotetramer.

The catalysed reaction is UTP + L-glutamine + ATP + H2O = CTP + L-glutamate + ADP + phosphate + 2 H(+). It carries out the reaction L-glutamine + H2O = L-glutamate + NH4(+). It catalyses the reaction UTP + NH4(+) + ATP = CTP + ADP + phosphate + 2 H(+). The protein operates within pyrimidine metabolism; CTP biosynthesis via de novo pathway; CTP from UDP: step 2/2. Its activity is regulated as follows. Allosterically activated by GTP, when glutamine is the substrate; GTP has no effect on the reaction when ammonia is the substrate. The allosteric effector GTP functions by stabilizing the protein conformation that binds the tetrahedral intermediate(s) formed during glutamine hydrolysis. Inhibited by the product CTP, via allosteric rather than competitive inhibition. Its function is as follows. Catalyzes the ATP-dependent amination of UTP to CTP with either L-glutamine or ammonia as the source of nitrogen. Regulates intracellular CTP levels through interactions with the four ribonucleotide triphosphates. This is CTP synthase from Methanoregula boonei (strain DSM 21154 / JCM 14090 / 6A8).